A 1434-amino-acid chain; its full sequence is Probable ATP-dependent RNA helicase spindle-E (1434 aa).

A Helicase ATP-binding domain is found at 125–292 (LAAINAHPVI…FATTNSIPPV (168 aa)). An ATP-binding site is contributed by 138–145 (GETGCGKT). A DEAH box motif is present at residues 238–241 (DEVH). Residues 339–526 (KIIVIIDNME…NSVLKAKVLN (188 aa)) enclose the Helicase C-terminal domain. Positions 938–1001 (AGDITKGMMV…RLMPRELTEQ (64 aa)) constitute a Tudor domain.

The protein belongs to the DEAD box helicase family. DEAH subfamily.

Its subcellular location is the cytoplasm. The catalysed reaction is ATP + H2O = ADP + phosphate + H(+). Functionally, probable ATP-binding RNA helicase which plays a central role during spermatogenesis and oogenesis by repressing transposable elements and preventing their mobilization, which is essential for the germline integrity. Acts via the piRNA metabolic process, which mediates the repression of transposable elements during meiosis by forming complexes composed of piRNAs and Piwi and govern the methylation and subsequent repression of transposons. Involved in the repression of LTR retrotransposon copia. Also involved in telomere regulation by repressing specialized telomeric retroelements HeT-A, TAHRE, and TART; Drosophila telomeres being maintained by transposition of specialized telomeric retroelements. Involved in telomeric trans-silencing, a repression mechanism by which a transposon or a transgene inserted in subtelomeric heterochromatin has the capacity to repress in trans in the female germline, a homologous transposon, or transgene located in euchromatin. Involved in the repression of testis-expressed Stellate genes by the homologous Su(Ste) repeats. Required for anteroposterior and dorsoventral axis formation during oogenesis. This chain is Probable ATP-dependent RNA helicase spindle-E (spn-E), found in Drosophila sechellia (Fruit fly).